We begin with the raw amino-acid sequence, 264 residues long: MKQYLELMQKVLDEGTQKNDRTGTGTLSIFGHQMRFNLQDGFPLVTTKRCHLRSIIHELLWFLQGDTNIAYLHENNVTIWDEWADENGDLGPVYGKQWRAWPTPDGRHIDQITTVLNQLKNDPDSRRIIVSAWNVGELDKMALAPCHAFFQFYVADGKLSCQLYQRSCDVFLGLPFNIASYALLVHMMAQQCDLEVGDFVWTGGDTHLYSNHMDQTHLQLSREPRPLPKLIIKRKPESIFDYRFEDFEIEGYAPHPGIKAPVAI.

A dUMP-binding site is contributed by Arg-21. A (6R)-5,10-methylene-5,6,7,8-tetrahydrofolate-binding site is contributed by His-51. 126–127 (RR) is a dUMP binding site. Cys-146 functions as the Nucleophile in the catalytic mechanism. Residues 166 to 169 (RSCD), Asn-177, and 207 to 209 (HLY) contribute to the dUMP site. Asp-169 is a binding site for (6R)-5,10-methylene-5,6,7,8-tetrahydrofolate. Ala-263 is a binding site for (6R)-5,10-methylene-5,6,7,8-tetrahydrofolate.

It belongs to the thymidylate synthase family. Bacterial-type ThyA subfamily. In terms of assembly, homodimer.

The protein resides in the cytoplasm. The enzyme catalyses dUMP + (6R)-5,10-methylene-5,6,7,8-tetrahydrofolate = 7,8-dihydrofolate + dTMP. It participates in pyrimidine metabolism; dTTP biosynthesis. Its function is as follows. Catalyzes the reductive methylation of 2'-deoxyuridine-5'-monophosphate (dUMP) to 2'-deoxythymidine-5'-monophosphate (dTMP) while utilizing 5,10-methylenetetrahydrofolate (mTHF) as the methyl donor and reductant in the reaction, yielding dihydrofolate (DHF) as a by-product. This enzymatic reaction provides an intracellular de novo source of dTMP, an essential precursor for DNA biosynthesis. This Shigella boydii serotype 4 (strain Sb227) protein is Thymidylate synthase.